The primary structure comprises 292 residues: 4-hydroxy-tetrahydrodipicolinate synthase (292 aa).

Residue T50 coordinates pyruvate. Catalysis depends on Y139, which acts as the Proton donor/acceptor. The active-site Schiff-base intermediate with substrate is K167. Position 208 (I208) interacts with pyruvate.

It belongs to the DapA family. Homotetramer; dimer of dimers.

The protein resides in the cytoplasm. It catalyses the reaction L-aspartate 4-semialdehyde + pyruvate = (2S,4S)-4-hydroxy-2,3,4,5-tetrahydrodipicolinate + H2O + H(+). It participates in amino-acid biosynthesis; L-lysine biosynthesis via DAP pathway; (S)-tetrahydrodipicolinate from L-aspartate: step 3/4. In terms of biological role, catalyzes the condensation of (S)-aspartate-beta-semialdehyde [(S)-ASA] and pyruvate to 4-hydroxy-tetrahydrodipicolinate (HTPA). The polypeptide is 4-hydroxy-tetrahydrodipicolinate synthase (Oenococcus oeni (strain ATCC BAA-331 / PSU-1)).